We begin with the raw amino-acid sequence, 343 residues long: S-adenosylmethionine:tRNA ribosyltransferase-isomerase (343 aa).

Belongs to the QueA family. In terms of assembly, monomer.

It localises to the cytoplasm. The catalysed reaction is 7-aminomethyl-7-carbaguanosine(34) in tRNA + S-adenosyl-L-methionine = epoxyqueuosine(34) in tRNA + adenine + L-methionine + 2 H(+). Its pathway is tRNA modification; tRNA-queuosine biosynthesis. Functionally, transfers and isomerizes the ribose moiety from AdoMet to the 7-aminomethyl group of 7-deazaguanine (preQ1-tRNA) to give epoxyqueuosine (oQ-tRNA). In Coxiella burnetii (strain Dugway 5J108-111), this protein is S-adenosylmethionine:tRNA ribosyltransferase-isomerase.